A 623-amino-acid polypeptide reads, in one-letter code: Dynein axonemal intermediate chain 2 (623 aa).

WD repeat units follow at residues lysine 214–glutamate 254, serine 261–glutamate 302, glycine 362–methionine 401, tyrosine 405–alanine 445, and valine 450–glutamine 489. The interval alanine 565 to isoleucine 602 is disordered. Residues lysine 570–serine 579 show a composition bias toward basic residues. The segment covering alanine 584 to alanine 598 has biased composition (acidic residues).

It belongs to the dynein intermediate chain family. As to quaternary structure, consists of at least two heavy chains and a number of intermediate and light chains. Interacts with DNAAF2. Interacts with DNAAF6/PIH1D3. Interacts with HEATR2; probably involved in outer arm dynein assembly. Interacts with CFAP53. In terms of tissue distribution, predominantly expressed in ovary, testis and lung.

The protein localises to the cytoplasm. The protein resides in the cytoskeleton. Its subcellular location is the cilium axoneme. It localises to the dynein axonemal particle. Its function is as follows. Part of the dynein complex of respiratory cilia. This is Dynein axonemal intermediate chain 2 (Dnai2) from Mus musculus (Mouse).